A 1029-amino-acid polypeptide reads, in one-letter code: Toll-like receptor 9 (1029 aa).

Residues 1-24 (MGPYCAPHPLSLLVQAAALAAALA) form the signal peptide. The Extracellular portion of the chain corresponds to 25 to 815 (EGTLPAFLPC…LCLDETLSLD (791 aa)). An intrachain disulfide couples C34 to C44. 46-50 (WLFLK) serves as a coordination point for DNA. 26 LRR repeats span residues 61–84 (RANVTSLSLISNRIHHLHDSDFVH), 86–109 (SNLRVLNLKWNCPPAGLSPMHFPC), 121–146 (VPTLEELNLSYNGITTVPALPSSLVS), 149–165 (LSHTSILVLGPTHFTGL), 166–189 (HALRFLYMDGNCYYMNPCPRALEV), 197–220 (LGNLTHLSLKYNNLTEVPRRLPPS), 222–241 (DTLLLSYNHIVTLAPEDLAN), 242–267 (LTALRVLDVGGNCRRCDHARNPCREC), 282–305 (LSRLEGLVLKDSSLYKLEKDWFRG), 307–331 (GRLQVLDLSENFLYDYITKTTIFND), 332–355 (LTQLRRLNLSFNYHKKVSFAHLHL), 362–385 (LVSLEKLDMHGIFFRSLTNITLQS), 389–412 (LPKLQSLHLQLNFINQAQLSIFGA), 414–439 (PSLLFVDLSDNRISGAATPAAALGEV), 469–492 (CNLNFTLDLSRNNLVTIQQEMFTR), 494–517 (SRLQCLRLSHNSISQAVNGSQFVP), 518–541 (LTSLRVLDLSHNKLDLYHGRSFTE), 543–570 (PQLEALDLSYNSQPFSMQGVGHNLSFVA), 572–596 (LPSLRYLSLAHNGIHSRVSQKLSSA), 598–620 (LRALDFSGNSLSQMWAEGDLYLC), 625–648 (LRNLVQLDLSENHLHTLLPRHLDN), 650–673 (PKSLRQLRLRDNNLAFFNWSSLTV), 674–697 (LPRLEALDLAGNQLKALSNGSLPP), 699–721 (IRLQKLDVSSNSIGFVIPGFFVR), 722–745 (ATRLIELNLSANALKTVDPSWFGS), and 747–770 (AGTLKILDVSANPLHCACGAAFVD). An N-linked (GlcNAc...) asparagine glycan is attached at N63. DNA is bound by residues 71–76 (SNRIHH) and 94–108 (KWNCPPAGLSPMHFP). A disulfide bond links C97 and C109. An N-linked (GlcNAc...) asparagine glycan is attached at N128. Y131 contributes to the DNA binding site. A disulfide bond links C177 and C183. Residue 178–180 (YYM) participates in DNA binding. N-linked (GlcNAc...) asparagine glycosylation occurs at N199. Position 207 (Y207) interacts with DNA. N-linked (GlcNAc...) asparagine glycans are attached at residues N209 and N241. 2 disulfides stabilise this stretch: C254-C267 and C257-C264. The S-palmitoyl cysteine moiety is linked to residue C257. R261 is a binding site for DNA. C264 carries S-palmitoyl cysteine lipidation. Residues N339 and N380 are each glycosylated (N-linked (GlcNAc...) asparagine). Cysteines 469 and 498 form a disulfide. N-linked (GlcNAc...) asparagine glycosylation is found at N472 and N511. N-linked (GlcNAc...) asparagine glycosylation is present at N565. Residues N667 and N692 are each glycosylated (N-linked (GlcNAc...) asparagine). The N-linked (GlcNAc...) asparagine glycan is linked to N729. 2 cysteine pairs are disulfide-bonded: C762-C788 and C764-C807. A helical transmembrane segment spans residues 816–836 (CFGLSLLMVALGLAVPMLHHL). Residues 837 to 1029 (CGWDLWYCFH…NFCRGPTTAE (193 aa)) are Cytoplasmic-facing. In terms of domain architecture, TIR spans 864 to 1009 (LLYDAVVVFD…SFWANLGIAL (146 aa)).

Belongs to the Toll-like receptor family. In terms of assembly, monomer and homodimer. Exists as a monomer in the absence of unmethylated cytidine-phosphate-guanosine (CpG) ligand. Proteolytic processing of an insertion loop (Z-loop) is required for homodimerization upon binding to the unmethylated CpG ligand leading to its activation. Interacts with MYD88 via their respective TIR domains. Interacts with BTK. Interacts (via transmembrane domain) with UNC93B1. Interacts with CD300LH; the interaction may promote full activation of TLR9-triggered innate responses. Interacts with CNPY3 and HSP90B1; this interaction is required for proper folding in the endoplasmic reticulum. Interacts with SMPDL3B. Interacts with CD82; this interaction is essential for TLR9-dependent myddosome formation in response to CpG stimulation. Post-translationally, activated by proteolytic cleavage of the flexible loop between repeats LRR14 and LRR15 within the ectodomain. Cleavage requires UNC93B1. Proteolytically processed by first removing the majority of the ectodomain by either asparagine endopeptidase (AEP) or a cathepsin followed by a trimming event that is solely cathepsin mediated and required for optimal receptor signaling. Palmitoylated by ZDHHC3 in the Golgi regulates TLR9 trafficking from the Golgi to endosomes. Depalmitoylation by PPT1 controls the release of TLR9 from UNC93B1 in endosomes.

The protein localises to the endoplasmic reticulum membrane. The protein resides in the endosome. It is found in the lysosome. It localises to the cytoplasmic vesicle. Its subcellular location is the phagosome. Functionally, key component of innate and adaptive immunity. TLRs (Toll-like receptors) control host immune response against pathogens through recognition of molecular patterns specific to microorganisms. TLR9 is a nucleotide-sensing TLR which is activated by unmethylated cytidine-phosphate-guanosine (CpG) dinucleotides. Acts via MYD88 and TRAF6, leading to NF-kappa-B activation, cytokine secretion and the inflammatory response. Upon CpG stimulation, induces B-cell proliferation, activation, survival and antibody production. This Bos taurus (Bovine) protein is Toll-like receptor 9 (TLR9).